The chain runs to 168 residues: GPI-anchored protein LLG1 (168 aa).

The signal sequence occupies residues 1–23 (MELLSRALFFFLLLSVLSSFSSS). Asparagine 57 is a glycosylation site (N-linked (GlcNAc...) asparagine). Asparagine 144 carries GPI-anchor amidated asparagine lipidation. Positions 145–168 (AATTSSSRLWLTVSAALLVFVKLF) are cleaved as a propeptide — removed in mature form.

As to quaternary structure, interacts with FER. As to expression, expressed in pollen, pollen tubes, sporophytic pistil tissues, in the early stages of female gametophyte development, and in unfertilized, mature ovules. Expressed in roots, lateral roots, shoots, cotyledons, petioles, developing leaves and anther filaments.

It localises to the cell membrane. Component of the FER-regulated Rho GTPase signaling complex. Acts as a chaperone and coreceptor for FER. Required for localization of FER to the plasma membrane. This is GPI-anchored protein LLG1 from Arabidopsis thaliana (Mouse-ear cress).